A 119-amino-acid polypeptide reads, in one-letter code: ATP-dependent Clp protease adapter protein ClpS (119 aa).

Residues 1-24 form a disordered region; that stretch reads MGPESPDSIPPHGPGNGDGDQDLD.

This sequence belongs to the ClpS family. Binds to the N-terminal domain of the chaperone ClpA.

Its function is as follows. Involved in the modulation of the specificity of the ClpAP-mediated ATP-dependent protein degradation. The protein is ATP-dependent Clp protease adapter protein ClpS of Gluconobacter oxydans (strain 621H) (Gluconobacter suboxydans).